Here is a 607-residue protein sequence, read N- to C-terminus: Elongation factor 4 (607 aa).

One can recognise a tr-type G domain in the interval 11-193; that stretch reads SKIRNFSIIA…QIVEKVPAPT (183 aa). Residues 23 to 28 and 140 to 143 contribute to the GTP site; these read DHGKST and NKID.

It belongs to the TRAFAC class translation factor GTPase superfamily. Classic translation factor GTPase family. LepA subfamily.

The protein localises to the cell membrane. The catalysed reaction is GTP + H2O = GDP + phosphate + H(+). In terms of biological role, required for accurate and efficient protein synthesis under certain stress conditions. May act as a fidelity factor of the translation reaction, by catalyzing a one-codon backward translocation of tRNAs on improperly translocated ribosomes. Back-translocation proceeds from a post-translocation (POST) complex to a pre-translocation (PRE) complex, thus giving elongation factor G a second chance to translocate the tRNAs correctly. Binds to ribosomes in a GTP-dependent manner. This Bacillus cereus (strain Q1) protein is Elongation factor 4.